The following is a 70-amino-acid chain: Cold shock-like protein CspI (70 aa).

The CSD domain maps to 7-67 (GLVKWFNPEK…GPKGPAAVHV (61 aa)).

The protein resides in the cytoplasm. The protein is Cold shock-like protein CspI (cspI) of Escherichia coli O6:H1 (strain CFT073 / ATCC 700928 / UPEC).